Reading from the N-terminus, the 329-residue chain is Beta-ketoacyl-[acyl-carrier-protein] synthase III (329 aa).

Residues cysteine 113 and histidine 255 contribute to the active site. The interval 256–260 is ACP-binding; the sequence is QANQR. Residue asparagine 285 is part of the active site.

Belongs to the thiolase-like superfamily. FabH family. As to quaternary structure, homodimer.

Its subcellular location is the cytoplasm. The enzyme catalyses malonyl-[ACP] + acetyl-CoA + H(+) = 3-oxobutanoyl-[ACP] + CO2 + CoA. It participates in lipid metabolism; fatty acid biosynthesis. In terms of biological role, catalyzes the condensation reaction of fatty acid synthesis by the addition to an acyl acceptor of two carbons from malonyl-ACP. Catalyzes the first condensation reaction which initiates fatty acid synthesis and may therefore play a role in governing the total rate of fatty acid production. Possesses both acetoacetyl-ACP synthase and acetyl transacylase activities. Its substrate specificity determines the biosynthesis of branched-chain and/or straight-chain of fatty acids. The protein is Beta-ketoacyl-[acyl-carrier-protein] synthase III of Chlorobium chlorochromatii (strain CaD3).